Here is a 3674-residue protein sequence, read N- to C-terminus: Dystrophin-1 (3674 aa).

Residues 1–25 form a disordered region; sequence MLFSGASTAKPKKDEKKDKKSDRDP. A compositionally biased stretch (basic and acidic residues) spans 11-25; that stretch reads PKKDEKKDKKSDRDP. The segment at 30-39 is actin-binding; the sequence is QEWVFVRWAN. A Calponin-homology (CH) domain is found at 129–234; sequence EKLSEAIKQW…YLMSLYLAMI (106 aa). Residues 265-325 form a disordered region; it reads SQPSTSSSSA…KSGKSKKARR (61 aa). Spectrin repeat units lie at residues 327–435, 436–541, and 612–656; these read EQLA…VLQQ, QIHL…KLDG, and CELV…TLVK. The span at 655 to 674 shows a compositional bias: basic and acidic residues; that stretch reads VKSGKADVKQVQESQNEQKE. 5 disordered regions span residues 655 to 689, 968 to 991, 1587 to 1606, 1796 to 1833, and 2387 to 2466; these read VKSG…TEGE, NSQM…EKRR, ASAE…SSPS, LSAT…SRSS, and MNDS…GSTG. Over residues 675–685 the composition is skewed to polar residues; it reads QPASSEGLSTD. Basic and acidic residues predominate over residues 975-991; sequence TVEKAETRKAEMEEKRR. Over residues 1796-1830 the composition is skewed to basic and acidic residues; it reads LSATEKKPVETVKSTIPDRPEVPEEPEKSSPDRTS. Polar residues predominate over residues 2391-2411; the sequence is GGDTTESRSTVVEMTSVHTKQ. Spectrin repeat units lie at residues 2576–2673, 2725–2789, 2792–2905, and 2926–3032; these read RNEM…VLEA, FKTL…RLEK, QEWE…RLKK, and QRLQ…AVRN. The WW domain occupies 3047 to 3081; sequence QSVTLPWQRAISKSNLLPYYIEQTSEKTQWEHPVW. Residues 3301-3357 form a ZZ-type zinc finger; the sequence is KHASKCNVCKMFPIIGIRYRCLTCFNCDLCQNCFFSQRTAKSHRTNHPMQEYCEKTT. Cys3306, Cys3309, Cys3321, Cys3324, Cys3330, Cys3333, His3343, and His3347 together coordinate Zn(2+). Disordered regions lie at residues 3481 to 3522 and 3568 to 3645; these read STME…TQSQ and KQQA…QMQN. The span at 3568–3579 shows a compositional bias: polar residues; the sequence is KQQAPLSTNSLL.

In terms of assembly, component of the dystrophin glycoprotein complex (DGC). Interacts with dyb-1 and stn-1 to form the DGC. Interacts with stn-2. In terms of tissue distribution, expressed in body wall, head, pharyngeal and vulval muscles, from late embryogenesis to adulthood (at protein level).

Its subcellular location is the cell membrane. It localises to the sarcolemma. The protein localises to the cytoplasm. The protein resides in the cytoskeleton. Functionally, plays a role in cholinergic transmission and as a functional partner of dystrobrevin (dyb-1), necessary for muscle maintenance. Required for neuronal positioning. May play a role in the localization of slo-1 near dense bodies in the muscle. The sequence is that of Dystrophin-1 (dys-1) from Caenorhabditis elegans.